A 285-amino-acid chain; its full sequence is Probable endonuclease 4 (285 aa).

Residues His-69, His-109, Glu-145, Asp-179, His-182, His-216, Asp-229, His-231, and Glu-261 each coordinate Zn(2+).

It belongs to the AP endonuclease 2 family. It depends on Zn(2+) as a cofactor.

The catalysed reaction is Endonucleolytic cleavage to 5'-phosphooligonucleotide end-products.. Endonuclease IV plays a role in DNA repair. It cleaves phosphodiester bonds at apurinic or apyrimidinic (AP) sites, generating a 3'-hydroxyl group and a 5'-terminal sugar phosphate. The sequence is that of Probable endonuclease 4 from Citrobacter koseri (strain ATCC BAA-895 / CDC 4225-83 / SGSC4696).